The sequence spans 341 residues: Phosphate acyltransferase (341 aa).

It belongs to the PlsX family. Homodimer. Probably interacts with PlsY.

Its subcellular location is the cytoplasm. It carries out the reaction a fatty acyl-[ACP] + phosphate = an acyl phosphate + holo-[ACP]. It functions in the pathway lipid metabolism; phospholipid metabolism. Catalyzes the reversible formation of acyl-phosphate (acyl-PO(4)) from acyl-[acyl-carrier-protein] (acyl-ACP). This enzyme utilizes acyl-ACP as fatty acyl donor, but not acyl-CoA. The polypeptide is Phosphate acyltransferase (Photobacterium profundum (strain SS9)).